Here is a 377-residue protein sequence, read N- to C-terminus: tRNA/tmRNA (uracil-C(5))-methyltransferase (377 aa).

S-adenosyl-L-methionine-binding residues include Gln-199, Tyr-227, Asn-232, Glu-248, and Asp-308. The Nucleophile role is filled by Cys-333. Glu-367 acts as the Proton acceptor in catalysis.

Belongs to the class I-like SAM-binding methyltransferase superfamily. RNA M5U methyltransferase family. TrmA subfamily.

The catalysed reaction is uridine(54) in tRNA + S-adenosyl-L-methionine = 5-methyluridine(54) in tRNA + S-adenosyl-L-homocysteine + H(+). It carries out the reaction uridine(341) in tmRNA + S-adenosyl-L-methionine = 5-methyluridine(341) in tmRNA + S-adenosyl-L-homocysteine + H(+). Functionally, dual-specificity methyltransferase that catalyzes the formation of 5-methyluridine at position 54 (m5U54) in all tRNAs, and that of position 341 (m5U341) in tmRNA (transfer-mRNA). This is tRNA/tmRNA (uracil-C(5))-methyltransferase from Aeromonas salmonicida (strain A449).